Consider the following 266-residue polypeptide: Thymidylate synthase (266 aa).

Arginine 24 contacts dUMP. (6R)-5,10-methylene-5,6,7,8-tetrahydrofolate is bound at residue histidine 54. 129–130 (RR) contributes to the dUMP binding site. Catalysis depends on cysteine 149, which acts as the Nucleophile. DUMP contacts are provided by residues 169 to 172 (RSAD), asparagine 180, and 210 to 212 (HIY). Residue aspartate 172 participates in (6R)-5,10-methylene-5,6,7,8-tetrahydrofolate binding. Alanine 265 lines the (6R)-5,10-methylene-5,6,7,8-tetrahydrofolate pocket.

The protein belongs to the thymidylate synthase family. Bacterial-type ThyA subfamily. As to quaternary structure, homodimer.

It localises to the cytoplasm. The enzyme catalyses dUMP + (6R)-5,10-methylene-5,6,7,8-tetrahydrofolate = 7,8-dihydrofolate + dTMP. Its pathway is pyrimidine metabolism; dTTP biosynthesis. Its function is as follows. Catalyzes the reductive methylation of 2'-deoxyuridine-5'-monophosphate (dUMP) to 2'-deoxythymidine-5'-monophosphate (dTMP) while utilizing 5,10-methylenetetrahydrofolate (mTHF) as the methyl donor and reductant in the reaction, yielding dihydrofolate (DHF) as a by-product. This enzymatic reaction provides an intracellular de novo source of dTMP, an essential precursor for DNA biosynthesis. In Mycobacterium bovis (strain ATCC BAA-935 / AF2122/97), this protein is Thymidylate synthase.